A 723-amino-acid chain; its full sequence is Transcription factor E2F7 (723 aa).

Residues 121–146 (AEEEEEEELDDSCQYEALDESERRPS) form a disordered region. Residues 122-139 (EEEEEEELDDSCQYEALD) are compositionally biased toward acidic residues. DNA-binding regions lie at residues 147-216 (RKQK…VWHG) and 264-349 (RKDK…KWIG). Composition is skewed to polar residues over residues 356–370 (SSNS…SNSG) and 395–405 (LISSAPSTPHR). Disordered stretches follow at residues 356–379 (SSNS…KMAR), 395–417 (LISS…YSRK), 489–546 (SLRK…ASFG), 650–689 (EHHG…SKSF), and 702–723 (QSAA…TAAN). Residues 494 to 503 (ERSEEDDHQT) show a composition bias toward basic and acidic residues. The segment covering 520–535 (SESLSSSTRRSPVCSP) has biased composition (low complexity).

The protein belongs to the E2F/DP family. In terms of assembly, homodimer and heterodimer: mainly forms homodimers and, to a lesser extent, heterodimers with e2f8.

It is found in the nucleus. Its function is as follows. Atypical E2F transcription factor that participates in various processes such as angiogenesis and polyploidization of specialized cells. Mainly acts as a transcription repressor that binds DNA independently of DP proteins and specifically recognizes the E2 recognition site 5'-TTTC[CG]CGC-3'. Directly represses transcription of classical E2F transcription factors such as e2f1. Acts as a regulator of S-phase by recognizing and binding the E2-related site 5'-TTCCCGCC-3' and mediating repression of G1/S-regulated genes. Acts as a promoter of sprouting angiogenesis, possibly by acting as a transcription activator and promoting expression of vegfa. This Danio rerio (Zebrafish) protein is Transcription factor E2F7 (e2f7).